Reading from the N-terminus, the 495-residue chain is Growth/differentiation factor 5 (495 aa).

Residues 1-27 (MRLPKLLTLLLWHLAWLDLELICTVLG) form the signal peptide. The propeptide occupies 28–375 (APDLGQRTPG…YLFSQRRKRR (348 aa)). Residues 30 to 162 (DLGQRTPGAK…KEPFRPPPIT (133 aa)) are disordered. Residues 124 to 137 (GGKASSKAGSAPSS) show a composition bias toward low complexity. The span at 142–156 (KTREPGTPREPKEPF) shows a compositional bias: basic and acidic residues. Asn183 carries an N-linked (GlcNAc...) asparagine glycan. 3 cysteine pairs are disulfide-bonded: Cys394–Cys460, Cys423–Cys492, and Cys427–Cys494.

The protein belongs to the TGF-beta family. Homodimer; disulfide-linked. Interacts with serine proteases, HTRA1 and HTRA3. Following LPS binding, may form a complex with CXCR4, HSP90AA1 and HSPA8. Interacts with high affinity with NOG; inhibits chondrogenesis. Interacts with high affinity with BMPR1B and lower affinity with BMPR1A; positively regulates chondrocyte differentiation and induces SMAD-dependent signaling. Interacts with FBN1 (via N-terminal domain) and FBN2. Interacts with TGFBR3.

The protein localises to the secreted. The protein resides in the cell membrane. Functionally, growth factor involved in bone and cartilage formation. During cartilage development regulates differentiation of chondrogenic tissue through two pathways. Firstly, positively regulates differentiation of chondrogenic tissue through its binding of high affinity with BMPR1B and of less affinity with BMPR1A, leading to induction of SMAD1-SMAD5-SMAD8 complex phosphorylation and then SMAD protein signaling transduction. Secondly, negatively regulates chondrogenic differentiation through its interaction with NOG. Required to prevent excessive muscle loss upon denervation. This function requires SMAD4 and is mediated by phosphorylated SMAD1/5/8. Binds bacterial lipopolysaccharide (LPS) and mediates LPS-induced inflammatory response, including TNF secretion by monocytes. This chain is Growth/differentiation factor 5 (Gdf5), found in Mus musculus (Mouse).